Reading from the N-terminus, the 441-residue chain is ATP-dependent protease ATPase subunit HslU (441 aa).

ATP is bound by residues I18, 60–65 (GVGKTE), D254, E319, and R391.

It belongs to the ClpX chaperone family. HslU subfamily. As to quaternary structure, a double ring-shaped homohexamer of HslV is capped on each side by a ring-shaped HslU homohexamer. The assembly of the HslU/HslV complex is dependent on binding of ATP.

It is found in the cytoplasm. ATPase subunit of a proteasome-like degradation complex; this subunit has chaperone activity. The binding of ATP and its subsequent hydrolysis by HslU are essential for unfolding of protein substrates subsequently hydrolyzed by HslV. HslU recognizes the N-terminal part of its protein substrates and unfolds these before they are guided to HslV for hydrolysis. The chain is ATP-dependent protease ATPase subunit HslU from Shewanella sediminis (strain HAW-EB3).